The following is a 434-amino-acid chain: Gamma-glutamyl phosphate reductase (434 aa).

The protein belongs to the gamma-glutamyl phosphate reductase family.

It is found in the cytoplasm. The enzyme catalyses L-glutamate 5-semialdehyde + phosphate + NADP(+) = L-glutamyl 5-phosphate + NADPH + H(+). It functions in the pathway amino-acid biosynthesis; L-proline biosynthesis; L-glutamate 5-semialdehyde from L-glutamate: step 2/2. Catalyzes the NADPH-dependent reduction of L-glutamate 5-phosphate into L-glutamate 5-semialdehyde and phosphate. The product spontaneously undergoes cyclization to form 1-pyrroline-5-carboxylate. In Trichormus variabilis (strain ATCC 29413 / PCC 7937) (Anabaena variabilis), this protein is Gamma-glutamyl phosphate reductase.